A 207-amino-acid chain; its full sequence is Large ribosomal subunit protein uL3 (207 aa).

The interval 126–149 (GPASHGSKKWHRRPGSIGQRKTPG) is disordered.

The protein belongs to the universal ribosomal protein uL3 family. As to quaternary structure, part of the 50S ribosomal subunit. Forms a cluster with proteins L14 and L19.

Its function is as follows. One of the primary rRNA binding proteins, it binds directly near the 3'-end of the 23S rRNA, where it nucleates assembly of the 50S subunit. This chain is Large ribosomal subunit protein uL3, found in Deinococcus geothermalis (strain DSM 11300 / CIP 105573 / AG-3a).